Reading from the N-terminus, the 133-residue chain is Nickel-responsive regulator (133 aa).

Ni(2+) is bound by residues H76, H87, H89, and C95.

Belongs to the transcriptional regulatory CopG/NikR family. Homotetramer. It depends on Ni(2+) as a cofactor.

In terms of biological role, transcriptional repressor of the nikABCDE operon. Is active in the presence of excessive concentrations of intracellular nickel. The polypeptide is Nickel-responsive regulator (Salmonella paratyphi A (strain ATCC 9150 / SARB42)).